A 394-amino-acid polypeptide reads, in one-letter code: Elongation factor Tu (394 aa).

In terms of domain architecture, tr-type G spans 10-204 (KPHINVGTIG…ALDKYIPEPQ (195 aa)). Positions 19 to 26 (GHVDHGKT) are G1. GTP is bound at residue 19-26 (GHVDHGKT). Position 26 (Thr26) interacts with Mg(2+). Positions 60-64 (GITIN) are G2. A G3 region spans residues 81–84 (DCPG). Residues 81–85 (DCPGH) and 136–139 (NKCD) each bind GTP. The interval 136-139 (NKCD) is G4. Positions 174–176 (SAL) are G5.

It belongs to the TRAFAC class translation factor GTPase superfamily. Classic translation factor GTPase family. EF-Tu/EF-1A subfamily. In terms of assembly, monomer.

It is found in the cytoplasm. The enzyme catalyses GTP + H2O = GDP + phosphate + H(+). Functionally, GTP hydrolase that promotes the GTP-dependent binding of aminoacyl-tRNA to the A-site of ribosomes during protein biosynthesis. This is Elongation factor Tu from Hamiltonella defensa subsp. Acyrthosiphon pisum (strain 5AT).